We begin with the raw amino-acid sequence, 125 residues long: uncharacterized protein (125 aa).

A helical transmembrane segment spans residues 100 to 120 (YFKVAFALAVLTPLAIWIFYI).

The protein localises to the membrane. This is an uncharacterized protein from Saccharomyces cerevisiae (strain ATCC 204508 / S288c) (Baker's yeast).